We begin with the raw amino-acid sequence, 387 residues long: Calcium sensing receptor, chloroplastic (387 aa).

The N-terminal 33 residues, 1 to 33 (MAMAEMATKSSLSAKLTLPSSSTKKTLSLRQVS), are a transit peptide targeting the chloroplast. Residues 34–186 (VSLPTSTSIS…TMDTISSADP (153 aa)) lie on the Lumenal, thylakoid side of the membrane. The chain crosses the membrane as a helical span at residues 187 to 207 (SVIVVAAGAAFLAYLLLPPVF). The Stromal segment spans residues 208–387 (SAISFNFRGY…SGTKFLPSSD (180 aa)). The region spanning 231–352 (CTKNYLMVDI…WLQSRLGTDS (122 aa)) is the Rhodanese domain. A Phosphothreonine modification is found at Thr380.

Phosphorylation seems to be light-dependent. Predominantly expressed in the shoot, including guard cells.

It is found in the plastid. The protein resides in the chloroplast thylakoid membrane. Its function is as follows. Modulates cytoplasmic Ca(2+) concentration and is crucial for proper stomatal regulation in response to elevated levels of external Ca(2+). May function by regulating concentrations of inositol 1,4,5-trisphosphate (IP3), which in turn triggers release of Ca(2+) from internal stores. May play a role in de-etiolation. In Arabidopsis thaliana (Mouse-ear cress), this protein is Calcium sensing receptor, chloroplastic (CAS).